The chain runs to 342 residues: N-acetyl-gamma-glutamyl-phosphate reductase (342 aa).

The active site involves Cys147.

It belongs to the NAGSA dehydrogenase family. Type 1 subfamily.

The protein localises to the cytoplasm. The catalysed reaction is N-acetyl-L-glutamate 5-semialdehyde + phosphate + NADP(+) = N-acetyl-L-glutamyl 5-phosphate + NADPH + H(+). Its pathway is amino-acid biosynthesis; L-arginine biosynthesis; N(2)-acetyl-L-ornithine from L-glutamate: step 3/4. Its function is as follows. Catalyzes the NADPH-dependent reduction of N-acetyl-5-glutamyl phosphate to yield N-acetyl-L-glutamate 5-semialdehyde. This is N-acetyl-gamma-glutamyl-phosphate reductase from Campylobacter jejuni subsp. jejuni serotype O:2 (strain ATCC 700819 / NCTC 11168).